The following is a 219-amino-acid chain: Glutathione S-transferase-like protein LUC7 (219 aa).

Residues 3 to 84 form the GST N-terminal domain; the sequence is PFGRLYSFMP…YLAQSGPYSE (82 aa). A GST C-terminal domain is found at 90–219; it reads DAATSAKIRQ…NLIDVKRVHE (130 aa).

Belongs to the GST superfamily.

Its function is as follows. Glutathione S-transferase-like protein; part of the gene cluster that mediates the biosynthesis of the mycotoxin lucilactaene and the lucilactaene-related compound NG-391 that act as cell cycle inhibitors with potent growth inhibitory activity against malarial parasites, moderate growth inhibitory activity against cancer cells, and no activity against bacteria and fungi. Within the cluster, LUC7 and LUC8 encode proteins which are not commonly involved in the biosynthesis of secondary metabolites and are not essential for lucilactaene biosynthesis. In Fusarium sp, this protein is Glutathione S-transferase-like protein LUC7.